Consider the following 340-residue polypeptide: Dihydroorotate dehydrogenase (quinone) (340 aa).

Residues 61 to 65 and threonine 85 each bind FMN; that span reads AGLDK. Lysine 65 contributes to the substrate binding site. Substrate is bound at residue 110–114; it reads NRMGF. FMN contacts are provided by asparagine 138 and asparagine 171. Asparagine 171 lines the substrate pocket. Serine 174 serves as the catalytic Nucleophile. Asparagine 176 contributes to the substrate binding site. FMN contacts are provided by lysine 216 and threonine 244. 245–246 lines the substrate pocket; it reads NT. FMN-binding positions include glycine 267, glycine 296, and 317-318; that span reads YT.

This sequence belongs to the dihydroorotate dehydrogenase family. Type 2 subfamily. As to quaternary structure, monomer. The cofactor is FMN.

The protein localises to the cell membrane. It catalyses the reaction (S)-dihydroorotate + a quinone = orotate + a quinol. Its pathway is pyrimidine metabolism; UMP biosynthesis via de novo pathway; orotate from (S)-dihydroorotate (quinone route): step 1/1. Catalyzes the conversion of dihydroorotate to orotate with quinone as electron acceptor. The sequence is that of Dihydroorotate dehydrogenase (quinone) from Marinobacter nauticus (strain ATCC 700491 / DSM 11845 / VT8) (Marinobacter aquaeolei).